A 329-amino-acid polypeptide reads, in one-letter code: 2-oxoglutarate-dependent dioxygenase mpl2 (329 aa).

Positions 183–288 constitute a Fe2OG dioxygenase domain; that stretch reads PACPLRLLHY…RYSVVFFFDG (106 aa). The Fe cation site is built by histidine 211, aspartate 213, and histidine 269. Arginine 279 is a binding site for 2-oxoglutarate.

The protein belongs to the iron/ascorbate-dependent oxidoreductase family. It depends on Fe(2+) as a cofactor.

It participates in mycotoxin biosynthesis. Functionally, 2-oxoglutarate-dependent dioxygenase; part of the gene cluster that mediates the biosynthesis of the mycotoxin citrinin, a hepato-nephrotoxic compound to humans due to inhibition of respiration complex III. The pathway begins with the synthesis of a keto-aldehyde intermediate by the citrinin PKS (pksCT) from successive condensations of 4 malonyl-CoA units, presumably with a simple acetyl-CoA starter unit. Release of the keto-aldehyde intermediate is consistent with the presence of the C-terminal reductive release domain. Mp11 collaborates with pksCT by catalyzing the hydrolysis of ACP-bound acyl intermediates to free the ACP from stalled intermediates. Mpl2 then catalyzes the oxidation of the C-12 methyl of the ketone intermediate to an alcohol intermediate which is further oxidized by the oxidoreductase mpl7 to produce a bisaldehyde intermediate. The fourth catalytic step is catalyzed by the mpl4 aldehyde dehydrogenase. The final transformation is the reduction of C-3 by mpl6 to provide the chemically stable citrinin nucleus. The chain is 2-oxoglutarate-dependent dioxygenase mpl2 from Monascus purpureus (Red mold).